Reading from the N-terminus, the 325-residue chain is Pectinesterase A (325 aa).

The first 18 residues, 1 to 18 (MRVQSYLSLFSLVGAALC), serve as a signal peptide directing secretion. N-linked (GlcNAc...) asparagine glycosylation occurs at asparagine 126. Glutamine 143 contacts substrate. The active-site Proton donor is the aspartate 166. Aspartate 187 functions as the Nucleophile in the catalytic mechanism. Substrate is bound by residues arginine 247 and tryptophan 249.

The protein belongs to the pectinesterase family.

The protein localises to the secreted. The catalysed reaction is [(1-&gt;4)-alpha-D-galacturonosyl methyl ester](n) + n H2O = [(1-&gt;4)-alpha-D-galacturonosyl](n) + n methanol + n H(+). It functions in the pathway glycan metabolism; pectin degradation; 2-dehydro-3-deoxy-D-gluconate from pectin: step 1/5. Involved in maceration and soft-rotting of plant tissue. Active against citrus pectin. The polypeptide is Pectinesterase A (pmeA) (Emericella nidulans (strain FGSC A4 / ATCC 38163 / CBS 112.46 / NRRL 194 / M139) (Aspergillus nidulans)).